The primary structure comprises 465 residues: Hexokinase-4 (465 aa).

The Hexokinase domain occupies 10–454 (ATKKEKVEQI…SGRGAALVSA (445 aa)). The tract at residues 67 to 203 (EGSEVGDFLS…DFEMDVVAMV (137 aa)) is hexokinase small subdomain. 78–83 (DLGGTN) provides a ligand contact to ATP. Substrate is bound by residues 151 to 152 (SF), 168 to 169 (TK), and 204 to 205 (ND). Residues 204-443 (NDTVATMISC…CEITFIESEE (240 aa)) form a hexokinase large subdomain region. T228 is an ATP binding site. N231, E256, and E290 together coordinate substrate. ATP-binding positions include 295–296 (GK), 332–336 (TRFVS), and 411–415 (SVYKL).

Belongs to the hexokinase family. As to quaternary structure, monomer. Interacts with MIDN; the interaction occurs preferentially at low glucose levels and results in inhibition of hexokinase activity. Interacts with GCKR; leading to sequestration in the nucleus.

Its subcellular location is the cytoplasm. The protein resides in the nucleus. It localises to the mitochondrion. It carries out the reaction a D-hexose + ATP = a D-hexose 6-phosphate + ADP + H(+). The catalysed reaction is D-fructose + ATP = D-fructose 6-phosphate + ADP + H(+). The enzyme catalyses D-glucose + ATP = D-glucose 6-phosphate + ADP + H(+). It catalyses the reaction D-mannose + ATP = D-mannose 6-phosphate + ADP + H(+). Its pathway is carbohydrate metabolism; hexose metabolism. It functions in the pathway carbohydrate degradation; glycolysis; D-glyceraldehyde 3-phosphate and glycerone phosphate from D-glucose: step 1/4. With respect to regulation, subject to allosteric regulation. Low glucose and high fructose-6-phosphate triggers association with the inhibitor GCKR followed by sequestration in the nucleus. Its function is as follows. Catalyzes the phosphorylation of hexose, such as D-glucose, D-fructose and D-mannose, to hexose 6-phosphate (D-glucose 6-phosphate, D-fructose 6-phosphate and D-mannose 6-phosphate, respectively). Compared to other hexokinases, has a weak affinity for D-glucose, and is effective only when glucose is abundant. Mainly expressed in pancreatic beta cells and the liver and constitutes a rate-limiting step in glucose metabolism in these tissues. Since insulin secretion parallels glucose metabolism and the low glucose affinity of GCK ensures that it can change its enzymatic activity within the physiological range of glucose concentrations, GCK acts as a glucose sensor in the pancreatic beta cell. In pancreas, plays an important role in modulating insulin secretion. In liver, helps to facilitate the uptake and conversion of glucose by acting as an insulin-sensitive determinant of hepatic glucose usage. Required to provide D-glucose 6-phosphate for the synthesis of glycogen. Mediates the initial step of glycolysis by catalyzing phosphorylation of D-glucose to D-glucose 6-phosphate. This chain is Hexokinase-4, found in Mus musculus (Mouse).